Here is a 206-residue protein sequence, read N- to C-terminus: Ras-related protein Ral-B (206 aa).

21-29 lines the GTP pocket; it reads GSGGVGKSA. Positions 43–51 match the Effector region motif; it reads YEPTKADSY. GTP is bound by residues 68–72, 128–131, and 158–160; these read DTAGQ, NKSD, and SAK. The segment covering 180–189 has biased composition (basic and acidic residues); sequence KMSENKDKNG. The disordered stretch occupies residues 180-206; that stretch reads KMSENKDKNGKKSGKNKKSFKERCCLL. A Cysteine methyl ester modification is found at cysteine 203. Cysteine 203 is lipidated: S-geranylgeranyl cysteine. Residues 204 to 206 constitute a propeptide, removed in mature form; the sequence is CLL.

Belongs to the small GTPase superfamily. Ras family. As to quaternary structure, interacts with EXOC2/Sec5 and EXOC8/Exo84. Interacts (via effector domain) with RALBP1. Prenylation is essential for membrane localization. Post-translationally, the farnesylated form confers resistance to the proapoptotic and anti-anchorage-dependent growth effects of some geranylgeranyltransferase I inhibitors.

The protein resides in the cell membrane. The protein localises to the midbody. It carries out the reaction GTP + H2O = GDP + phosphate + H(+). Alternates between an inactive form bound to GDP and an active form bound to GTP. Activated by a guanine nucleotide-exchange factor (GEF) and inactivated by a GTPase-activating protein (GAP). Functionally, multifunctional GTPase involved in a variety of cellular processes including gene expression, cell migration, cell proliferation, oncogenic transformation and membrane trafficking. Accomplishes its multiple functions by interacting with distinct downstream effectors. Acts as a GTP sensor for GTP-dependent exocytosis of dense core vesicles. Required both to stabilize the assembly of the exocyst complex and to localize functional exocyst complexes to the leading edge of migrating cells. Required for suppression of apoptosis. In late stages of cytokinesis, upon completion of the bridge formation between dividing cells, mediates exocyst recruitment to the midbody to drive abscission. Involved in ligand-dependent receptor mediated endocytosis of the EGF and insulin receptors. The chain is Ras-related protein Ral-B (RALB) from Macaca fascicularis (Crab-eating macaque).